Reading from the N-terminus, the 142-residue chain is UPF0102 protein PsycPRwf_0497 (142 aa).

Belongs to the UPF0102 family.

This chain is UPF0102 protein PsycPRwf_0497, found in Psychrobacter sp. (strain PRwf-1).